Consider the following 557-residue polypeptide: Formate--tetrahydrofolate ligase (557 aa).

65-72 (TPAGEGKT) lines the ATP pocket.

The protein belongs to the formate--tetrahydrofolate ligase family.

The catalysed reaction is (6S)-5,6,7,8-tetrahydrofolate + formate + ATP = (6R)-10-formyltetrahydrofolate + ADP + phosphate. It participates in one-carbon metabolism; tetrahydrofolate interconversion. The chain is Formate--tetrahydrofolate ligase from Methylococcus capsulatus (strain ATCC 33009 / NCIMB 11132 / Bath).